We begin with the raw amino-acid sequence, 204 residues long: FMN-dependent NADH:quinone oxidoreductase 1 (204 aa).

Residues serine 14, 20–22 (SMS), and 99–102 (MYNF) each bind FMN.

The protein belongs to the azoreductase type 1 family. As to quaternary structure, homodimer. FMN serves as cofactor.

It catalyses the reaction 2 a quinone + NADH + H(+) = 2 a 1,4-benzosemiquinone + NAD(+). The enzyme catalyses N,N-dimethyl-1,4-phenylenediamine + anthranilate + 2 NAD(+) = 2-(4-dimethylaminophenyl)diazenylbenzoate + 2 NADH + 2 H(+). Its function is as follows. Quinone reductase that provides resistance to thiol-specific stress caused by electrophilic quinones. Functionally, also exhibits azoreductase activity. Catalyzes the reductive cleavage of the azo bond in aromatic azo compounds to the corresponding amines. This chain is FMN-dependent NADH:quinone oxidoreductase 1, found in Hahella chejuensis (strain KCTC 2396).